A 306-amino-acid chain; its full sequence is Polyphosphate kinase PPK2B (306 aa).

This sequence belongs to the polyphosphate kinase 2 (PPK2) family. Class I subfamily. As to quaternary structure, homotetramer. Requires Mn(2+) as cofactor.

It catalyses the reaction [phosphate](n) + ATP = [phosphate](n+1) + ADP. The catalysed reaction is [phosphate](n) + GTP = [phosphate](n+1) + GDP. In terms of biological role, catalyzes the synthesis of polyP from ATP or GTP. Can also use inorganic polyphosphate (polyP) as a donor to convert ADP to ATP, but the activity is 10-fold higher in vitro for polyP synthesis than for ATP formation. This Corynebacterium glutamicum (strain ATCC 13032 / DSM 20300 / JCM 1318 / BCRC 11384 / CCUG 27702 / LMG 3730 / NBRC 12168 / NCIMB 10025 / NRRL B-2784 / 534) protein is Polyphosphate kinase PPK2B.